We begin with the raw amino-acid sequence, 482 residues long: MKFIIKLFPEITIKSQSVRLRFIKILTGNIRNVLKHYDETLAVVRHWDNIEVRAKDENQRLAIRDALTRIPGIHHILEVEDVPFTDMHDIFEKALVQYRDQLEGKTFCVRVKRRGKHDFSSIDVERYVGGGLNQHIESARVKLTNPEVTVHLEVEDDRLLLIKGRYEGIGGFPIGTQEDVLSLISGGFDSGVSSYMLMRRGCRVHYCFFNLGGAAHEIGVRQVAHYLWNRFGSSHRVRFVAINFEPVVGEILEKIDDGQMGVILKRMMVRAASKVAERYGVQALVTGEALGQVSSQTLTNLRLIDNVSDTLILRPLISYDKEHIINLARQIGTEDFARTMPEYCGVISKSPTVKAVKSKIEAEEEKFDFSILDKVVEEANNVDIREIAQQTEQEVVEVETVNGFGPNDVILDIRSIDEQEDKPLKVEGIDVVSLPFYKLSTKFGDLDQNRTWLLWCERGVMSRLQALYLREQGFNNVKVYRL.

In terms of domain architecture, THUMP spans 61–165 (LAIRDALTRI…DDRLLLIKGR (105 aa)). ATP-binding positions include 183–184 (LI), Lys-265, Gly-287, and Gln-296. Cys-344 and Cys-456 form a disulfide bridge. One can recognise a Rhodanese domain in the interval 404–482 (FGPNDVILDI…GFNNVKVYRL (79 aa)). Residue Cys-456 is the Cysteine persulfide intermediate of the active site.

This sequence belongs to the ThiI family.

Its subcellular location is the cytoplasm. It carries out the reaction [ThiI sulfur-carrier protein]-S-sulfanyl-L-cysteine + a uridine in tRNA + 2 reduced [2Fe-2S]-[ferredoxin] + ATP + H(+) = [ThiI sulfur-carrier protein]-L-cysteine + a 4-thiouridine in tRNA + 2 oxidized [2Fe-2S]-[ferredoxin] + AMP + diphosphate. The enzyme catalyses [ThiS sulfur-carrier protein]-C-terminal Gly-Gly-AMP + S-sulfanyl-L-cysteinyl-[cysteine desulfurase] + AH2 = [ThiS sulfur-carrier protein]-C-terminal-Gly-aminoethanethioate + L-cysteinyl-[cysteine desulfurase] + A + AMP + 2 H(+). Its pathway is cofactor biosynthesis; thiamine diphosphate biosynthesis. In terms of biological role, catalyzes the ATP-dependent transfer of a sulfur to tRNA to produce 4-thiouridine in position 8 of tRNAs, which functions as a near-UV photosensor. Also catalyzes the transfer of sulfur to the sulfur carrier protein ThiS, forming ThiS-thiocarboxylate. This is a step in the synthesis of thiazole, in the thiamine biosynthesis pathway. The sulfur is donated as persulfide by IscS. The sequence is that of tRNA sulfurtransferase from Shigella boydii serotype 18 (strain CDC 3083-94 / BS512).